Reading from the N-terminus, the 489-residue chain is Betaine aldehyde dehydrogenase (489 aa).

K(+) contacts are provided by Thr-26 and Asp-93. 150 to 152 (GAW) is a binding site for NAD(+). The active-site Charge relay system is Lys-162. 176 to 179 (KPSE) contacts NAD(+). Residue Val-180 participates in K(+) binding. 229–232 (GVET) provides a ligand contact to NAD(+). K(+) is bound at residue Leu-245. The Proton acceptor role is filled by Glu-251. Residues Gly-253, Cys-285, and Glu-386 each contribute to the NAD(+) site. The Nucleophile role is filled by Cys-285. The residue at position 285 (Cys-285) is a Cysteine sulfenic acid (-SOH). K(+) contacts are provided by Lys-456 and Gly-459. Glu-463 serves as the catalytic Charge relay system.

Belongs to the aldehyde dehydrogenase family. Dimer of dimers. Requires K(+) as cofactor.

The enzyme catalyses betaine aldehyde + NAD(+) + H2O = glycine betaine + NADH + 2 H(+). Its pathway is amine and polyamine biosynthesis; betaine biosynthesis via choline pathway; betaine from betaine aldehyde: step 1/1. Involved in the biosynthesis of the osmoprotectant glycine betaine. Catalyzes the irreversible oxidation of betaine aldehyde to the corresponding acid. The chain is Betaine aldehyde dehydrogenase from Paraburkholderia phymatum (strain DSM 17167 / CIP 108236 / LMG 21445 / STM815) (Burkholderia phymatum).